A 535-amino-acid chain; its full sequence is GMP synthase [glutamine-hydrolyzing] (535 aa).

Positions 24–217 constitute a Glutamine amidotransferase type-1 domain; the sequence is KILIVDFGSQ…VRKVAGLTGD (194 aa). Cys-101 (nucleophile) is an active-site residue. Catalysis depends on residues His-191 and Glu-193. Positions 218 to 410 constitute a GMPS ATP-PPase domain; it reads WTMRAFREEA…LGLPEIFVGR (193 aa). ATP is bound at residue 245–251; that stretch reads SGGVDSS.

In terms of assembly, homodimer.

It catalyses the reaction XMP + L-glutamine + ATP + H2O = GMP + L-glutamate + AMP + diphosphate + 2 H(+). The protein operates within purine metabolism; GMP biosynthesis; GMP from XMP (L-Gln route): step 1/1. In terms of biological role, catalyzes the synthesis of GMP from XMP. The polypeptide is GMP synthase [glutamine-hydrolyzing] (Nitrobacter winogradskyi (strain ATCC 25391 / DSM 10237 / CIP 104748 / NCIMB 11846 / Nb-255)).